Here is a 215-residue protein sequence, read N- to C-terminus: UPF0502 protein YceH (215 aa).

Residue Lys80 is modified to N6-acetyllysine.

The protein belongs to the UPF0502 family.

The sequence is that of UPF0502 protein YceH from Escherichia coli O127:H6 (strain E2348/69 / EPEC).